The chain runs to 505 residues: COMPASS component BRE2 (505 aa).

The region spanning 70–295 (SANPFFTILG…LKQETTNKEF (226 aa)) is the B30.2/SPRY domain. A Phosphoserine modification is found at Ser-227. Residues 271–290 (EPWREDAENGPSRKKLKQET) form a disordered region. Residue Lys-318 participates in DNA binding. The interval 398 to 420 (RDESNDKNTTSAKKKKQQQKKKK) is disordered. The segment covering 409–420 (AKKKKQQQKKKK) has biased composition (basic residues).

It belongs to the cclA family. In terms of assembly, component of the Set1C/COMPASS complex which consists of SET1(2), BRE2(2), SPP1(2), SDC1(1), SHG1(1), SWD1(1), SWD2(1), and SWD3(1). Interacts directly with SDC1.

It is found in the nucleus. The protein localises to the chromosome. Its subcellular location is the telomere. Functionally, component of the Set1C/COMPASS complex that specifically mono-, di- and trimethylates histone H3 to form H3K4me1/2/3, which subsequently plays a role in telomere length maintenance and transcription elongation regulation. COMPASS recognizes ubiquitinated H2B on one face of the nucleosome which stimulates the methylation of H3 on the opposing face. This Saccharomyces cerevisiae (strain ATCC 204508 / S288c) (Baker's yeast) protein is COMPASS component BRE2.